A 306-amino-acid polypeptide reads, in one-letter code: PPERRKPREEGLRHCLQIGVEALKARKSPLDVVELVVRELENNEHFNAGIGSVLTNSGTVEMEASIMDGKSMKCGAVSGLSTVLNPISLARLVMEKTPHMYLAFQGAQDFAKQQGVETVDSSHFITAENVERLKLAIEANRVQIDYSQYNYTQPVQDDAEKELPVANGDSQIGTVGCVAVDSQGNLASATSTGGLVNKMVGRIGDTPLIGAGTYANELCAVSATGKGEAIIQATVARDVAALMEFKGLSLKEAADYVVHERTPKGTVGLIAVSAAGEIAMPFNTTGMFRACATEDGNSEIAIWPPA.

The active-site Nucleophile is T174. Residues 202–205 (RIGD) and 224–227 (TGKG) contribute to the substrate site.

It belongs to the Ntn-hydrolase family. As to quaternary structure, heterotetramer of two alpha and two beta chains arranged as a dimer of alpha/beta heterodimers. In terms of processing, cleaved into an alpha and beta chain by autocatalysis; this activates the enzyme. The N-terminal residue of the beta subunit is responsible for the nucleophile hydrolase activity. In terms of tissue distribution, developing seeds.

The catalysed reaction is Cleavage of a beta-linked Asp residue from the N-terminus of a polypeptide.. In terms of biological role, degrades proteins damaged by L-isoaspartyl residue formation (also known as beta-Asp residues). Also has L-asparaginase activity, which is used to liberate stored nitrogen during seed development. The sequence is that of Isoaspartyl peptidase/L-asparaginase from Lupinus arboreus (Tree lupine).